The chain runs to 349 residues: tRNA pseudouridine synthase D (349 aa).

Phe27 contributes to the substrate binding site. Asp80 (nucleophile) is an active-site residue. Asn129 contacts substrate. A TRUD domain is found at 155-303; that stretch reads GVPNYFGAQR…VEASRRAMLL (149 aa). Phe329 is a substrate binding site.

The protein belongs to the pseudouridine synthase TruD family.

It carries out the reaction uridine(13) in tRNA = pseudouridine(13) in tRNA. Responsible for synthesis of pseudouridine from uracil-13 in transfer RNAs. This is tRNA pseudouridine synthase D from Salmonella newport (strain SL254).